Consider the following 666-residue polypeptide: ATP-dependent zinc metalloprotease FtsH (666 aa).

Residues 1-6 (MKSETG) are Cytoplasmic-facing. The helical transmembrane segment at 7–27 (YMGFVVVLVFMVLLALQLATL) threads the bilayer. Topologically, residues 28 to 116 (SAPATQIAYS…TRYRGADDDT (89 aa)) are periplasmic. Residues 117–137 (WIGTLASWIVPIAVFALVWNL) traverse the membrane as a helical segment. The Cytoplasmic portion of the chain corresponds to 138–666 (MLRRPRGGLQ…ADNADHSVPQ (529 aa)). 210-217 (GAPGTGKT) is a binding site for ATP. His432 lines the Zn(2+) pocket. Glu433 is an active-site residue. Zn(2+)-binding residues include His436 and Asp509. The tract at residues 612-666 (NDEPTPEPGARDPGGDAAKRSGIGAAPAKPPAEVGSAELRDPARKADNADHSVPQ) is disordered. Composition is skewed to basic and acidic residues over residues 620–630 (GARDPGGDAAK) and 649–666 (ELRD…SVPQ).

This sequence in the central section; belongs to the AAA ATPase family. The protein in the C-terminal section; belongs to the peptidase M41 family. In terms of assembly, homohexamer. Zn(2+) is required as a cofactor.

Its subcellular location is the cell inner membrane. In terms of biological role, acts as a processive, ATP-dependent zinc metallopeptidase for both cytoplasmic and membrane proteins. Plays a role in the quality control of integral membrane proteins. This is ATP-dependent zinc metalloprotease FtsH from Burkholderia pseudomallei (strain 1710b).